Reading from the N-terminus, the 494-residue chain is MDREYGSYNQRSVNSYGNQSFSMDEMGDSNFSRFGPYESYDSRSSVGGRDLYRSGYGYNDHEQGHFGDSYDGRYENPYRNSVDSFEGRSQGGSSWDPSFTRSKVRTGFMEDRGRDSYSSYGSFSSPYMKPAAVGSRGRGMPAYPENAFGGRSNDAFGGPSKGRGRGRGQMPEYGVMRRHRVVVEYKHLGVAARGAARGVKRKMAPPFKPVGFFGKKQKLSKPGANQNKSVPPPAEKLSEEEEEKRRTEARREKQRRRREKNSEKYGDGTAFTCSFCKFRSFDEKGIEEHLTSATHQEMLDHIQKQTKFDKPVMEFLHECIVNKFKKTVARRVQSVANEAAKTLEKDVMEGVNPDDHMMKVETVHCSACSVYVPALHSSVQLHLKSADHSKSKLTYKEQIKRESILTATSILNNPLVKARYELYLKGENPFETQPDEQQQEQEEEEEEEEQQEQVAVSEQEPSEQETSDEQAAAIAAEPEGEDFTCDPLTTTDEV.

Disordered stretches follow at residues 1–22 (MDRE…QSFS), 147–170 (AFGG…RGQM), and 202–264 (KMAP…NSEK). Residues 7-22 (SYNQRSVNSYGNQSFS) are compositionally biased toward polar residues. The Bipartite nuclear localization signal signature appears at 200 to 221 (KRKMAPPFKPVGFFGKKQKLSK). C2H2 AKAP95-type zinc fingers lie at residues 273–295 (CSFC…SATH) and 365–388 (CSAC…SADH). The disordered stretch occupies residues 429–494 (PFETQPDEQQ…CDPLTTTDEV (66 aa)). The span at 433 to 451 (QPDEQQQEQEEEEEEEEQQ) shows a compositional bias: acidic residues.

Belongs to the AKAP95 family. As to quaternary structure, component of the DBIRD complex.

It is found in the nucleus. Core component of the DBIRD complex, a multiprotein complex that acts at the interface between core mRNP particles and RNA polymerase II (RNAPII) and integrates transcript elongation with the regulation of alternative splicing. This is DBIRD complex subunit ZNF326 (znf326) from Xenopus laevis (African clawed frog).